The chain runs to 224 residues: Cytidylate kinase (224 aa).

11-19 is a binding site for ATP; the sequence is GPAAAGKST.

It belongs to the cytidylate kinase family. Type 1 subfamily.

The protein resides in the cytoplasm. It catalyses the reaction CMP + ATP = CDP + ADP. The enzyme catalyses dCMP + ATP = dCDP + ADP. The protein is Cytidylate kinase (cmk) of Bacillus subtilis (strain 168).